The chain runs to 260 residues: Aspartate/glutamate leucyltransferase (260 aa).

Positions 241–251 (DRLPEEGDRGP) are enriched in basic and acidic residues. Residues 241-260 (DRLPEEGDRGPARFPASLTE) are disordered.

It belongs to the R-transferase family. Bpt subfamily.

The protein localises to the cytoplasm. It catalyses the reaction N-terminal L-glutamyl-[protein] + L-leucyl-tRNA(Leu) = N-terminal L-leucyl-L-glutamyl-[protein] + tRNA(Leu) + H(+). It carries out the reaction N-terminal L-aspartyl-[protein] + L-leucyl-tRNA(Leu) = N-terminal L-leucyl-L-aspartyl-[protein] + tRNA(Leu) + H(+). Functions in the N-end rule pathway of protein degradation where it conjugates Leu from its aminoacyl-tRNA to the N-termini of proteins containing an N-terminal aspartate or glutamate. The chain is Aspartate/glutamate leucyltransferase from Gluconacetobacter diazotrophicus (strain ATCC 49037 / DSM 5601 / CCUG 37298 / CIP 103539 / LMG 7603 / PAl5).